The following is a 476-amino-acid chain: Angiotensinogen (476 aa).

The N-terminal stretch at 1 to 24 (MAPAGLSLGATILCLLAWAGLAAG) is a signal peptide. Residues C42 and C161 are joined by a disulfide bond. The segment at 45 to 64 (LEKPSVETPADPTLTPVPIQ) is disordered. N-linked (GlcNAc...) asparagine glycosylation occurs at N295.

This sequence belongs to the serpin family. Post-translationally, in response to low blood pressure, the enzyme renin/REN cleaves angiotensinogen to produce angiotensin-1. Angiotensin-1 is a substrate of ACE (angiotensin converting enzyme) that removes a dipeptide to yield the physiologically active peptide angiotensin-2. Angiotensin-1 and angiotensin-2 can be further processed to generate angiotensin-3, angiotensin-4. Angiotensin 1-9 is cleaved from angiotensin-1 by ACE2 and can be further processed by ACE to produce angiotensin 1-7, angiotensin 1-5 and angiotensin 1-4. Angiotensin 1-7 has also been proposed to be cleaved from angiotensin-2 by ACE2 or from angiotensin-1 by MME (neprilysin). The disulfide bond is labile. Angiotensinogen is present in the circulation in a near 40:60 ratio with the oxidized disulfide-bonded form, which preferentially interacts with receptor-bound renin.

The protein localises to the secreted. In terms of biological role, essential component of the renin-angiotensin system (RAS), a potent regulator of blood pressure, body fluid and electrolyte homeostasis. Its function is as follows. Acts directly on vascular smooth muscle as a potent vasoconstrictor, affects cardiac contractility and heart rate through its action on the sympathetic nervous system, and alters renal sodium and water absorption through its ability to stimulate the zona glomerulosa cells of the adrenal cortex to synthesize and secrete aldosterone. Acts by binding to angiotensin receptors AGTR1 and AGTR2. Also binds the DEAR/FBXW7-AS1 receptor. Stimulates aldosterone release. Functionally, is a ligand for the G-protein coupled receptor MAS1. Has vasodilator and antidiuretic effects. Has an antithrombotic effect that involves MAS1-mediated release of nitric oxide from platelets. The polypeptide is Angiotensinogen (AGT) (Ovis aries (Sheep)).